Here is a 121-residue protein sequence, read N- to C-terminus: Phospholipase A2 homolog ECO_00035 (121 aa).

7 disulfide bridges follow: cysteine 25–cysteine 114, cysteine 27–cysteine 43, cysteine 42–cysteine 94, cysteine 48–cysteine 121, cysteine 49–cysteine 87, cysteine 56–cysteine 80, and cysteine 74–cysteine 85. Residues 104 to 116 (KKYKIYPNILCRG) form an important for membrane-damaging activities in eukaryotes and bacteria; heparin-binding region.

Belongs to the phospholipase A2 family. Group II subfamily. S49 sub-subfamily. In terms of assembly, monomer. As to expression, expressed by the venom gland.

The protein localises to the secreted. Snake venom phospholipase A2 homolog that lacks enzymatic activity. Shows high myotoxin activities and displays edema-inducing activities. Has cytotoxic activities against HUVEC cells (LC(50)=4.9 uL) and human lung adenocarcinoma A549 cells (LC(50)=3.5 uL). This chain is Phospholipase A2 homolog ECO_00035, found in Echis coloratus (Carpet viper).